The chain runs to 315 residues: T-box transcription factor tbx-8 (315 aa).

Residues 11-195 constitute a DNA-binding region (T-box); the sequence is EDQDKLWNLF…FNPFAKGFRE (185 aa). A compositionally biased stretch (basic and acidic residues) spans 193–203; sequence FREGSQSDRKR. Disordered stretches follow at residues 193 to 235 and 293 to 315; these read FREG…SVSP and PPPS…INVV. A compositionally biased stretch (low complexity) spans 205–225; that stretch reads SPSADDSTTDESSSQVSSPQP. The segment covering 305 to 315 has biased composition (acidic residues); it reads QEDIEQEINVV.

The protein resides in the nucleus. Transcription factor. Involved in the control of early morphogenesis of the intestine, hypodermis and body-wall muscle. Involved in regulating expression of vab-7. Appears to have partially redundant function to tbx-9. The polypeptide is T-box transcription factor tbx-8 (tbx-8) (Caenorhabditis elegans).